The primary structure comprises 288 residues: tRNA-cytidine(32) 2-sulfurtransferase (288 aa).

A PP-loop motif motif is present at residues 70–75 (SGGKDS). Residues Cys145, Cys148, and Cys236 each contribute to the [4Fe-4S] cluster site.

Belongs to the TtcA family. As to quaternary structure, homodimer. Mg(2+) serves as cofactor. The cofactor is [4Fe-4S] cluster.

The protein localises to the cytoplasm. The catalysed reaction is cytidine(32) in tRNA + S-sulfanyl-L-cysteinyl-[cysteine desulfurase] + AH2 + ATP = 2-thiocytidine(32) in tRNA + L-cysteinyl-[cysteine desulfurase] + A + AMP + diphosphate + H(+). It functions in the pathway tRNA modification. Functionally, catalyzes the ATP-dependent 2-thiolation of cytidine in position 32 of tRNA, to form 2-thiocytidine (s(2)C32). The sulfur atoms are provided by the cysteine/cysteine desulfurase (IscS) system. The polypeptide is tRNA-cytidine(32) 2-sulfurtransferase (Bartonella tribocorum (strain CIP 105476 / IBS 506)).